A 228-amino-acid polypeptide reads, in one-letter code: L-ornithine N5-acetyltransferase NATA1 (228 aa).

A disordered region spans residues 1–21; that stretch reads MAPPTAAPEPNTVPETSPTGH. The N-acetyltransferase domain occupies 77 to 227; that stretch reads VFLLEISPSP…DALQAIDKLN (151 aa). Acetyl-CoA contacts are provided by residues 153 to 155, 161 to 166, 192 to 195, and Tyr-199; these read IFM, RKGFGK, and NVNA.

The protein belongs to the acetyltransferase family.

Functionally, acetyltransferase that converts ornithine to N5-acetylornithine, which is likely used in plant defense. The sequence is that of L-ornithine N5-acetyltransferase NATA1 (NATA1) from Arabidopsis thaliana (Mouse-ear cress).